A 346-amino-acid polypeptide reads, in one-letter code: Annexin A1 (346 aa).

Ala2 is subject to N-acetylalanine. Ser5 is modified (phosphoserine; by TRPM7). Gln19 participates in a covalent cross-link: Isoglutamyl lysine isopeptide (Gln-Lys) (interchain with K-?). Phosphotyrosine; by EGFR is present on Tyr21. 2 positions are modified to phosphoserine: Ser34 and Ser37. Thr41 bears the Phosphothreonine mark. 4 Annexin repeats span residues 42 to 113 (FNPS…ALLK), 114 to 185 (TPAQ…SLAK), 197 to 269 (DLAD…VIVK), and 273 to 344 (SQPM…ALCG). Lys58 carries the N6-acetyllysine modification. The Ca(2+) site is built by Gly59, Val60, Glu62, Lys97, Leu100, Glu105, Met127, Gly129, Gly131, Thr132, and Glu134. Position 136 is a phosphothreonine (Thr136). Positions 171, 210, and 213 each coordinate Ca(2+). A Glycyl lysine isopeptide (Lys-Gly) (interchain with G-Cter in SUMO1); alternate cross-link involves residue Lys214. Lys214 participates in a covalent cross-link: Glycyl lysine isopeptide (Lys-Gly) (interchain with G-Cter in SUMO2); alternate. Residue Gly215 coordinates Ca(2+). Lys239 is modified (N6-acetyllysine). The Ca(2+) site is built by Asp253, Glu255, and Leu256. Lys257 participates in a covalent cross-link: Glycyl lysine isopeptide (Lys-Gly) (interchain with G-Cter in SUMO1). Residues Glu261, Met286, Gly288, and Gly290 each contribute to the Ca(2+) site. N6-acetyllysine is present on Lys312. A disulfide bridge connects residues Cys324 and Cys343. Ca(2+) contacts are provided by Leu328, Glu330, and Thr331. A Glycyl lysine isopeptide (Lys-Gly) (interchain with G-Cter in SUMO1) cross-link involves residue Lys332. Glu336 contacts Ca(2+).

The protein belongs to the annexin family. Homodimer; non-covalently linked. Homodimer; linked by transglutamylation. Homodimers linked by transglutamylation are observed in placenta, but not in other tissues. Interacts with S100A11. Heterotetramer, formed by two molecules each of S100A11 and ANXA1. Interacts with DYSF. Interacts with EGFR. Post-translationally, phosphorylated by protein kinase C, EGFR and TRPM7. Phosphorylated in response to EGF treatment. In terms of processing, sumoylated. Proteolytically cleaved by cathepsin CTSG to release the active N-terminal peptide Ac2-26. In terms of tissue distribution, detected on surface epithelia and mucosal glands in nasal cavity, trachea, bronchi and bronchioles. Detected in blood vessel endothelial cells. Detected in neutrophils (at protein level).

The protein localises to the nucleus. It localises to the cytoplasm. The protein resides in the cell projection. Its subcellular location is the cilium. It is found in the basolateral cell membrane. The protein localises to the lateral cell membrane. It localises to the cell membrane. The protein resides in the apical cell membrane. Its subcellular location is the membrane. It is found in the endosome membrane. The protein localises to the secreted. It localises to the extracellular space. The protein resides in the early endosome. Its subcellular location is the cytoplasmic vesicle membrane. It is found in the extracellular exosome. The protein localises to the cytoplasmic vesicle. It localises to the secretory vesicle lumen. The protein resides in the phagocytic cup. In terms of biological role, plays important roles in the innate immune response as effector of glucocorticoid-mediated responses and regulator of the inflammatory process. Has anti-inflammatory activity. Plays a role in glucocorticoid-mediated down-regulation of the early phase of the inflammatory response. Contributes to the adaptive immune response by enhancing signaling cascades that are triggered by T-cell activation, regulates differentiation and proliferation of activated T-cells. Promotes the differentiation of T-cells into Th1 cells and negatively regulates differentiation into Th2 cells. Has no effect on unstimulated T-cells. Negatively regulates hormone exocytosis via activation of the formyl peptide receptors and reorganization of the actin cytoskeleton. Has high affinity for Ca(2+) and can bind up to eight Ca(2+) ions. Displays Ca(2+)-dependent binding to phospholipid membranes. Plays a role in the formation of phagocytic cups and phagosomes. Plays a role in phagocytosis by mediating the Ca(2+)-dependent interaction between phagosomes and the actin cytoskeleton. Functions at least in part by activating the formyl peptide receptors and downstream signaling cascades. Promotes chemotaxis of granulocytes and monocytes via activation of the formyl peptide receptors. Promotes rearrangement of the actin cytoskeleton, cell polarization and cell migration. Promotes resolution of inflammation and wound healing. Acts via neutrophil N-formyl peptide receptors to enhance the release of CXCL2. In Bos taurus (Bovine), this protein is Annexin A1 (ANXA1).